The primary structure comprises 147 residues: MKIIATNKKAFSDYIILETYEAGIELRGTEVKSLRESGANFKDSFCRIKNGEVFLLNLNIPQYRNGSLNNHDPERPRRLLLHKKEIHRLLGKVKEQGLTIIPTKIYFNNRGLVKVEIAVAKGKKKYDKREDIKKREINRRIREYLKG.

The protein belongs to the SmpB family.

Its subcellular location is the cytoplasm. Functionally, required for rescue of stalled ribosomes mediated by trans-translation. Binds to transfer-messenger RNA (tmRNA), required for stable association of tmRNA with ribosomes. tmRNA and SmpB together mimic tRNA shape, replacing the anticodon stem-loop with SmpB. tmRNA is encoded by the ssrA gene; the 2 termini fold to resemble tRNA(Ala) and it encodes a 'tag peptide', a short internal open reading frame. During trans-translation Ala-aminoacylated tmRNA acts like a tRNA, entering the A-site of stalled ribosomes, displacing the stalled mRNA. The ribosome then switches to translate the ORF on the tmRNA; the nascent peptide is terminated with the 'tag peptide' encoded by the tmRNA and targeted for degradation. The ribosome is freed to recommence translation, which seems to be the essential function of trans-translation. In Thermosipho melanesiensis (strain DSM 12029 / CIP 104789 / BI429), this protein is SsrA-binding protein.